A 301-amino-acid polypeptide reads, in one-letter code: Putative glycosyltransferase MJ1113 (301 aa).

Transmembrane regions (helical) follow at residues 2-22 (GHYFINLFTYTIIAFIFSAVL), 62-82 (FIPFVNPIFVLPIITAGIIGI), 95-115 (LILLFISGLIIGILFYNNSYV), 117-137 (LIEILIIALGIMISSNLTNML), 140-160 (FNGLEIGMGVIASISLALVLF), 164-184 (YTTGFLSALIFSASYLGLLIF), 191-211 (VFPGDVGTLPIGAFLAVLAVV), and 280-300 (VTVLWIIGIFFGIVGILISLI).

It belongs to the glycosyltransferase 4 family.

The protein localises to the cell membrane. The sequence is that of Putative glycosyltransferase MJ1113 from Methanocaldococcus jannaschii (strain ATCC 43067 / DSM 2661 / JAL-1 / JCM 10045 / NBRC 100440) (Methanococcus jannaschii).